The following is a 203-amino-acid chain: Urease accessory protein UreG (203 aa).

Position 11-18 (11-18) interacts with GTP; the sequence is GPVGSGKT.

This sequence belongs to the SIMIBI class G3E GTPase family. UreG subfamily. Homodimer. UreD, UreF and UreG form a complex that acts as a GTP-hydrolysis-dependent molecular chaperone, activating the urease apoprotein by helping to assemble the nickel containing metallocenter of UreC. The UreE protein probably delivers the nickel.

Its subcellular location is the cytoplasm. Functionally, facilitates the functional incorporation of the urease nickel metallocenter. This process requires GTP hydrolysis, probably effectuated by UreG. The sequence is that of Urease accessory protein UreG from Prochlorococcus marinus (strain MIT 9215).